Reading from the N-terminus, the 204-residue chain is Large ribosomal subunit protein eL15 (204 aa).

This sequence belongs to the eukaryotic ribosomal protein eL15 family. Component of the large ribosomal subunit.

The protein localises to the cytoplasm. Component of the large ribosomal subunit. The ribosome is a large ribonucleoprotein complex responsible for the synthesis of proteins in the cell. The polypeptide is Large ribosomal subunit protein eL15 (rpl15) (Hypophthalmichthys nobilis (Bighead carp)).